The primary structure comprises 246 residues: Flagellar brake protein YcgR (246 aa).

Positions 122 to 234 constitute a PilZ domain; sequence QRREFFRIQT…PMETIIQRYV (113 aa).

This sequence belongs to the YcgR family. In terms of assembly, monomer. Interacts with the flagellar basal bodies.

Its subcellular location is the bacterial flagellum basal body. Functionally, acts as a flagellar brake, regulating swimming and swarming in a bis-(3'-5') cyclic diguanylic acid (c-di-GMP)-dependent manner. Binds 1 c-di-GMP dimer per subunit. Increasing levels of c-di-GMP lead to decreased motility. In Chromobacterium violaceum (strain ATCC 12472 / DSM 30191 / JCM 1249 / CCUG 213 / NBRC 12614 / NCIMB 9131 / NCTC 9757 / MK), this protein is Flagellar brake protein YcgR.